Reading from the N-terminus, the 276-residue chain is NH(3)-dependent NAD(+) synthetase (276 aa).

43–50 is an ATP binding site; the sequence is GISGGVDS. Asp49 is a Mg(2+) binding site. Residue Arg146 coordinates deamido-NAD(+). Thr166 is a binding site for ATP. Glu171 lines the Mg(2+) pocket. Deamido-NAD(+) is bound by residues Lys179 and Asp186. ATP-binding residues include Lys195 and Thr217. 266-267 serves as a coordination point for deamido-NAD(+); sequence HK.

The protein belongs to the NAD synthetase family. As to quaternary structure, homodimer.

The catalysed reaction is deamido-NAD(+) + NH4(+) + ATP = AMP + diphosphate + NAD(+) + H(+). Its pathway is cofactor biosynthesis; NAD(+) biosynthesis; NAD(+) from deamido-NAD(+) (ammonia route): step 1/1. Functionally, catalyzes the ATP-dependent amidation of deamido-NAD to form NAD. Uses ammonia as a nitrogen source. The sequence is that of NH(3)-dependent NAD(+) synthetase from Shewanella frigidimarina (strain NCIMB 400).